The sequence spans 945 residues: Isoleucine--tRNA ligase (945 aa).

Positions 66–76 (PYANGDIHLGH) match the 'HIGH' region motif. Residue glutamate 581 coordinates L-isoleucyl-5'-AMP. The 'KMSKS' region motif lies at 622-626 (KMSKS). Lysine 625 contacts ATP. Residues cysteine 908, cysteine 911, cysteine 928, and cysteine 931 each contribute to the Zn(2+) site.

The protein belongs to the class-I aminoacyl-tRNA synthetase family. IleS type 1 subfamily. In terms of assembly, monomer. It depends on Zn(2+) as a cofactor.

Its subcellular location is the cytoplasm. The enzyme catalyses tRNA(Ile) + L-isoleucine + ATP = L-isoleucyl-tRNA(Ile) + AMP + diphosphate. In terms of biological role, catalyzes the attachment of isoleucine to tRNA(Ile). As IleRS can inadvertently accommodate and process structurally similar amino acids such as valine, to avoid such errors it has two additional distinct tRNA(Ile)-dependent editing activities. One activity is designated as 'pretransfer' editing and involves the hydrolysis of activated Val-AMP. The other activity is designated 'posttransfer' editing and involves deacylation of mischarged Val-tRNA(Ile). This is Isoleucine--tRNA ligase from Burkholderia orbicola (strain MC0-3).